Reading from the N-terminus, the 154-residue chain is SKP1-like protein 13 (154 aa).

The interval 96–154 is interaction with the F-box domain of F-box proteins; it reads MLAANYLNIKDLLDLGCQTVADMITGKKPDEIRALLGIENDFTPEEEEEIRKENQWAFE.

This sequence belongs to the SKP1 family. Part of a SCF (SKP1-cullin-F-box) protein ligase complex. Interacts with ADO3/FKF1, EBF1, PP2A13, SKIP15, SKIP16, CPR1/CPR30, At1g55000, At3g61590, At1g67340, At1g78100, At3g04660, At4g38940, At4g39550 and At5g49610. In terms of tissue distribution, mostly expressed in inflorescences, and, to a lower extent, in seedlings and siliques. Also detected in cotyledons, leaves, pollen and seeds.

The protein localises to the nucleus. It functions in the pathway protein modification; protein ubiquitination. In terms of biological role, involved in ubiquitination and subsequent proteasomal degradation of target proteins. Together with CUL1, RBX1 and a F-box protein, it forms a SCF E3 ubiquitin ligase complex. The functional specificity of this complex depends on the type of F-box protein. In the SCF complex, it serves as an adapter that links the F-box protein to CUL1. This is SKP1-like protein 13 (ASK13) from Arabidopsis thaliana (Mouse-ear cress).